A 35-amino-acid polypeptide reads, in one-letter code: Somatostatin (35 aa).

A disulfide bond links Cys24 and Cys35.

Belongs to the somatostatin family.

It is found in the secreted. Somatostatin inhibits the release of somatotropin. The chain is Somatostatin (sst) from Lampetra fluviatilis (European river lamprey).